Reading from the N-terminus, the 432-residue chain is Tryptophan--tRNA ligase, cytoplasmic (432 aa).

The 'HIGH' region signature appears at Pro-111–His-120. Positions Lys-295–Ser-299 match the 'KMSKS' region motif.

This sequence belongs to the class-I aminoacyl-tRNA synthetase family. In terms of assembly, homodimer.

The protein resides in the cytoplasm. It catalyses the reaction tRNA(Trp) + L-tryptophan + ATP = L-tryptophyl-tRNA(Trp) + AMP + diphosphate + H(+). The protein is Tryptophan--tRNA ligase, cytoplasmic (WRS1) of Saccharomyces cerevisiae (strain ATCC 204508 / S288c) (Baker's yeast).